Reading from the N-terminus, the 105-residue chain is Cell division protein FtsB (105 aa).

Topologically, residues 1–3 (MGK) are cytoplasmic. The chain crosses the membrane as a helical span at residues 4–21 (LTLLLLVLLGWLQYSLWL). Residues 22–105 (GKNGVHDLVR…PAAPATQDNQ (84 aa)) are Periplasmic-facing. Positions 28–62 (DLVRVESDVAAQQSNNAQLKARNDQLFAEIDDLNG) form a coiled coil.

It belongs to the FtsB family. As to quaternary structure, part of a complex composed of FtsB, FtsL and FtsQ.

The protein localises to the cell inner membrane. In terms of biological role, essential cell division protein. May link together the upstream cell division proteins, which are predominantly cytoplasmic, with the downstream cell division proteins, which are predominantly periplasmic. The sequence is that of Cell division protein FtsB from Sodalis glossinidius (strain morsitans).